We begin with the raw amino-acid sequence, 192 residues long: 3-isopropylmalate dehydratase small subunit (192 aa).

This sequence belongs to the LeuD family. LeuD type 1 subfamily. As to quaternary structure, heterodimer of LeuC and LeuD.

The enzyme catalyses (2R,3S)-3-isopropylmalate = (2S)-2-isopropylmalate. It participates in amino-acid biosynthesis; L-leucine biosynthesis; L-leucine from 3-methyl-2-oxobutanoate: step 2/4. Functionally, catalyzes the isomerization between 2-isopropylmalate and 3-isopropylmalate, via the formation of 2-isopropylmaleate. This is 3-isopropylmalate dehydratase small subunit from Oceanobacillus iheyensis (strain DSM 14371 / CIP 107618 / JCM 11309 / KCTC 3954 / HTE831).